Here is a 139-residue protein sequence, read N- to C-terminus: MIIGIGSDLIDIRRVAKVIERHGDRFLNRVFTEIERAKAERRATNEKMVVSTYAKRFAAKEACAKALGTGIRQGVWWRDMGVVNLQAGQPSMMLTGGALKRLQLLTPPGLEVRIDVSLTDDWPLAQAFVIISAAAAGKL.

Asp8 and Glu61 together coordinate Mg(2+).

The protein belongs to the P-Pant transferase superfamily. AcpS family. The cofactor is Mg(2+).

Its subcellular location is the cytoplasm. It carries out the reaction apo-[ACP] + CoA = holo-[ACP] + adenosine 3',5'-bisphosphate + H(+). Functionally, transfers the 4'-phosphopantetheine moiety from coenzyme A to a Ser of acyl-carrier-protein. The polypeptide is Holo-[acyl-carrier-protein] synthase (Nitrobacter winogradskyi (strain ATCC 25391 / DSM 10237 / CIP 104748 / NCIMB 11846 / Nb-255)).